The primary structure comprises 89 residues: cAMP-regulated phosphoprotein 21 (89 aa).

The tract at residues 1 to 89 is disordered; the sequence is MSEPGDLSQT…GGESLQDQTL (89 aa). Ser2 carries the N-acetylserine modification. 2 positions are modified to phosphoserine: Ser33 and Ser56.

Interacts with CALM1. In terms of processing, phosphorylation at Ser-56 favors interaction with CALM1.

It is found in the cytoplasm. Functionally, may act as a competitive inhibitor of calmodulin-dependent enzymes such as calcineurin in neurons. The chain is cAMP-regulated phosphoprotein 21 (ARPP21) from Bos taurus (Bovine).